Reading from the N-terminus, the 440-residue chain is Probable cytosolic iron-sulfur protein assembly protein 1 (440 aa).

WD repeat units follow at residues 12 to 51 (AHAEPAWTVSFNPTRSLLASCSTDRTIRLYSYIIPSSSDG), 71 to 110 (DHKRTVRSIAWSPDGRTLASGSFDSTVGVWEEVIPLSDDE), 148 to 187 (GHESECKSVGFSSDGALLASCSRDKSVWVWEVQPDADFEC), 193 to 233 (EHSQ…WCIF), 278 to 317 (EEDETVWCLAWSPDGRWLASGGDNGGIRLWQRTGSQPDSA), 326 to 379 (AHSR…SPSS), and 401 to 440 (HGVNDINSVAWCVREDKKGWGMLSSAGDDGSVKVWRVVRD). Residues 107 to 116 (SDDEEEEDEG) are compositionally biased toward acidic residues. Residues 107–137 (SDDEEEEDEGAQGVYKPAGVDSDGDGDGGKE) are disordered.

This sequence belongs to the WD repeat CIA1 family.

Functionally, essential component of the cytosolic iron-sulfur (Fe/S) protein assembly machinery. Required for the maturation of extramitochondrial Fe/S proteins. This chain is Probable cytosolic iron-sulfur protein assembly protein 1, found in Cryptococcus neoformans var. neoformans serotype D (strain B-3501A) (Filobasidiella neoformans).